The following is a 491-amino-acid chain: Glutamyl-tRNA(Gln) amidotransferase subunit A (491 aa).

Active-site charge relay system residues include lysine 78 and serine 158. Serine 182 (acyl-ester intermediate) is an active-site residue.

Belongs to the amidase family. GatA subfamily. In terms of assembly, heterotrimer of A, B and C subunits.

It catalyses the reaction L-glutamyl-tRNA(Gln) + L-glutamine + ATP + H2O = L-glutaminyl-tRNA(Gln) + L-glutamate + ADP + phosphate + H(+). Allows the formation of correctly charged Gln-tRNA(Gln) through the transamidation of misacylated Glu-tRNA(Gln) in organisms which lack glutaminyl-tRNA synthetase. The reaction takes place in the presence of glutamine and ATP through an activated gamma-phospho-Glu-tRNA(Gln). The polypeptide is Glutamyl-tRNA(Gln) amidotransferase subunit A (Bradyrhizobium sp. (strain BTAi1 / ATCC BAA-1182)).